The sequence spans 335 residues: Holliday junction branch migration complex subunit RuvB (335 aa).

The segment at 1 to 183 (MDERIISSET…FGVIDHLEFY (183 aa)) is large ATPase domain (RuvB-L). ATP contacts are provided by residues Leu-22, Arg-23, Gly-64, Lys-67, Thr-68, Thr-69, 130-132 (EDY), Arg-173, Tyr-183, and Arg-220. Thr-68 provides a ligand contact to Mg(2+). The interval 184-254 (TEEQLTEIVL…LAKEALTLLQ (71 aa)) is small ATPAse domain (RuvB-S). The segment at 257-335 (PRGLDTIDQK…HLGISYEKEV (79 aa)) is head domain (RuvB-H). Residues Arg-293, Arg-312, and Arg-317 each coordinate DNA.

This sequence belongs to the RuvB family. As to quaternary structure, homohexamer. Forms an RuvA(8)-RuvB(12)-Holliday junction (HJ) complex. HJ DNA is sandwiched between 2 RuvA tetramers; dsDNA enters through RuvA and exits via RuvB. An RuvB hexamer assembles on each DNA strand where it exits the tetramer. Each RuvB hexamer is contacted by two RuvA subunits (via domain III) on 2 adjacent RuvB subunits; this complex drives branch migration. In the full resolvosome a probable DNA-RuvA(4)-RuvB(12)-RuvC(2) complex forms which resolves the HJ.

The protein localises to the cytoplasm. It catalyses the reaction ATP + H2O = ADP + phosphate + H(+). The RuvA-RuvB-RuvC complex processes Holliday junction (HJ) DNA during genetic recombination and DNA repair, while the RuvA-RuvB complex plays an important role in the rescue of blocked DNA replication forks via replication fork reversal (RFR). RuvA specifically binds to HJ cruciform DNA, conferring on it an open structure. The RuvB hexamer acts as an ATP-dependent pump, pulling dsDNA into and through the RuvAB complex. RuvB forms 2 homohexamers on either side of HJ DNA bound by 1 or 2 RuvA tetramers; 4 subunits per hexamer contact DNA at a time. Coordinated motions by a converter formed by DNA-disengaged RuvB subunits stimulates ATP hydrolysis and nucleotide exchange. Immobilization of the converter enables RuvB to convert the ATP-contained energy into a lever motion, pulling 2 nucleotides of DNA out of the RuvA tetramer per ATP hydrolyzed, thus driving DNA branch migration. The RuvB motors rotate together with the DNA substrate, which together with the progressing nucleotide cycle form the mechanistic basis for DNA recombination by continuous HJ branch migration. Branch migration allows RuvC to scan DNA until it finds its consensus sequence, where it cleaves and resolves cruciform DNA. In Listeria welshimeri serovar 6b (strain ATCC 35897 / DSM 20650 / CCUG 15529 / CIP 8149 / NCTC 11857 / SLCC 5334 / V8), this protein is Holliday junction branch migration complex subunit RuvB.